A 279-amino-acid chain; its full sequence is Tryptophan 2,3-dioxygenase (279 aa).

Substrate is bound by residues 48 to 52 (FIVIH), Tyr110, and Arg114. His237 lines the heme pocket. Thr251 is a substrate binding site.

This sequence belongs to the tryptophan 2,3-dioxygenase family. As to quaternary structure, homotetramer. Requires heme as cofactor.

It catalyses the reaction L-tryptophan + O2 = N-formyl-L-kynurenine. The protein operates within amino-acid degradation; L-tryptophan degradation via kynurenine pathway; L-kynurenine from L-tryptophan: step 1/2. In terms of biological role, heme-dependent dioxygenase that catalyzes the oxidative cleavage of the L-tryptophan (L-Trp) pyrrole ring and converts L-tryptophan to N-formyl-L-kynurenine. Catalyzes the oxidative cleavage of the indole moiety. The sequence is that of Tryptophan 2,3-dioxygenase from Bacillus thuringiensis (strain Al Hakam).